The sequence spans 550 residues: Chaperonin GroEL (550 aa).

ATP is bound by residues Thr30 to Pro33, Lys51, Asp87 to Thr91, Gly415, and Asp496. The interval Glu528–Met550 is disordered. Residues Gly538 to Met550 are compositionally biased toward gly residues.

This sequence belongs to the chaperonin (HSP60) family. In terms of assembly, forms a cylinder of 14 subunits composed of two heptameric rings stacked back-to-back. Interacts with the co-chaperonin GroES.

Its subcellular location is the cytoplasm. It carries out the reaction ATP + H2O + a folded polypeptide = ADP + phosphate + an unfolded polypeptide.. Functionally, together with its co-chaperonin GroES, plays an essential role in assisting protein folding. The GroEL-GroES system forms a nano-cage that allows encapsulation of the non-native substrate proteins and provides a physical environment optimized to promote and accelerate protein folding. This chain is Chaperonin GroEL, found in Chlorobium phaeobacteroides (strain BS1).